The sequence spans 336 residues: Inositol 2-dehydrogenase (336 aa).

This sequence belongs to the Gfo/Idh/MocA family. As to quaternary structure, homotetramer.

The catalysed reaction is myo-inositol + NAD(+) = scyllo-inosose + NADH + H(+). In terms of biological role, involved in the oxidation of myo-inositol (MI) to 2-keto-myo-inositol (2KMI or 2-inosose). This Pseudomonas syringae pv. syringae (strain B728a) protein is Inositol 2-dehydrogenase.